The primary structure comprises 551 residues: Tetrachloroethene reductive dehalogenase (551 aa).

Positions 1–39 (MGEINRRNFLKASMLGAAAAAVASASVVKGVVSPLVADA) form a signal peptide, tat-type signal. In terms of domain architecture, 4Fe-4S ferredoxin-type 1 spans 411 to 440 (PRKFGVREFCRLCKKCADACPAQAISHEKD). 8 residues coordinate [4Fe-4S] cluster: Cys-420, Cys-423, Cys-426, Cys-430, Cys-467, Cys-478, Cys-481, and Cys-485. Residues 478 to 496 (CSNCVAVCSWNKVETWNHD) enclose the 4Fe-4S ferredoxin-type 2 domain.

The protein belongs to the PceA family. It depends on [4Fe-4S] cluster as a cofactor. Corrinoid serves as cofactor. Post-translationally, predicted to be exported by the Tat system. The position of the signal peptide cleavage has been experimentally proven.

Its subcellular location is the cell membrane. The catalysed reaction is trichloroethene + chloride + A + H(+) = tetrachloroethene + AH2. The enzyme catalyses trichloroethene + AH2 = (Z)-1,2-dichloroethene + chloride + A + H(+). Catalyzes the reductive dechlorination of tetrachloroethene (PCE) to trichloroethene (TCE) and of trichloroethene to cis-1,2-dichloroethene (DCE). Reduced methyl viologen can act as the artificial electron donor. The protein is Tetrachloroethene reductive dehalogenase of Desulfitobacterium hafniense (Desulfitobacterium frappieri).